The sequence spans 92 residues: YcgL domain-containing protein Shewmr7_2249 (92 aa).

In terms of domain architecture, YcgL spans 1–85 (MLCAVYKSSR…PQVNLLAEHR (85 aa)).

The protein is YcgL domain-containing protein Shewmr7_2249 of Shewanella sp. (strain MR-7).